Consider the following 515-residue polypeptide: Bifunctional purine biosynthesis protein PurH (515 aa).

The region spanning 1 to 145 (MTKRVLISVS…KNHASVTVVV (145 aa)) is the MGS-like domain.

This sequence belongs to the PurH family.

The catalysed reaction is (6R)-10-formyltetrahydrofolate + 5-amino-1-(5-phospho-beta-D-ribosyl)imidazole-4-carboxamide = 5-formamido-1-(5-phospho-D-ribosyl)imidazole-4-carboxamide + (6S)-5,6,7,8-tetrahydrofolate. It carries out the reaction IMP + H2O = 5-formamido-1-(5-phospho-D-ribosyl)imidazole-4-carboxamide. Its pathway is purine metabolism; IMP biosynthesis via de novo pathway; 5-formamido-1-(5-phospho-D-ribosyl)imidazole-4-carboxamide from 5-amino-1-(5-phospho-D-ribosyl)imidazole-4-carboxamide (10-formyl THF route): step 1/1. It functions in the pathway purine metabolism; IMP biosynthesis via de novo pathway; IMP from 5-formamido-1-(5-phospho-D-ribosyl)imidazole-4-carboxamide: step 1/1. This Streptococcus pneumoniae (strain 70585) protein is Bifunctional purine biosynthesis protein PurH.